The primary structure comprises 559 residues: CTP synthase (559 aa).

The interval 1–270 (MTKFVFVTGG…DGLICDKLRI (270 aa)) is amidoligase domain. A CTP-binding site is contributed by Ser13. Ser13 lines the UTP pocket. ATP is bound by residues 14-19 (SLGKGI) and Asp71. Mg(2+) contacts are provided by Asp71 and Glu144. Residues 151-153 (DIE), 191-196 (KTKPTQ), and Lys227 each bind CTP. Residues 191 to 196 (KTKPTQ) and Lys227 each bind UTP. Residues 295–547 (SIAMVGKYVD…IKAALDHKAR (253 aa)) form the Glutamine amidotransferase type-1 domain. Gly356 provides a ligand contact to L-glutamine. The Nucleophile; for glutamine hydrolysis role is filled by Cys383. L-glutamine is bound by residues 384–387 (LGMQ), Glu407, and Arg473. Active-site residues include His520 and Glu522.

Belongs to the CTP synthase family. In terms of assembly, homotetramer.

It catalyses the reaction UTP + L-glutamine + ATP + H2O = CTP + L-glutamate + ADP + phosphate + 2 H(+). The enzyme catalyses L-glutamine + H2O = L-glutamate + NH4(+). The catalysed reaction is UTP + NH4(+) + ATP = CTP + ADP + phosphate + 2 H(+). It functions in the pathway pyrimidine metabolism; CTP biosynthesis via de novo pathway; CTP from UDP: step 2/2. With respect to regulation, allosterically activated by GTP, when glutamine is the substrate; GTP has no effect on the reaction when ammonia is the substrate. The allosteric effector GTP functions by stabilizing the protein conformation that binds the tetrahedral intermediate(s) formed during glutamine hydrolysis. Inhibited by the product CTP, via allosteric rather than competitive inhibition. Catalyzes the ATP-dependent amination of UTP to CTP with either L-glutamine or ammonia as the source of nitrogen. Regulates intracellular CTP levels through interactions with the four ribonucleotide triphosphates. The sequence is that of CTP synthase from Variovorax paradoxus (strain S110).